The primary structure comprises 486 residues: Glutamate--tRNA ligase (486 aa).

Residues 11–21 (PSPTGLLHIGN) carry the 'HIGH' region motif. The short motif at 255 to 259 (KLSKR) is the 'KMSKS' region element. An ATP-binding site is contributed by Lys258.

The protein belongs to the class-I aminoacyl-tRNA synthetase family. Glutamate--tRNA ligase type 1 subfamily. As to quaternary structure, monomer.

It localises to the cytoplasm. The catalysed reaction is tRNA(Glu) + L-glutamate + ATP = L-glutamyl-tRNA(Glu) + AMP + diphosphate. Catalyzes the attachment of glutamate to tRNA(Glu) in a two-step reaction: glutamate is first activated by ATP to form Glu-AMP and then transferred to the acceptor end of tRNA(Glu). The protein is Glutamate--tRNA ligase of Streptococcus pneumoniae (strain ATCC BAA-255 / R6).